The following is an 852-amino-acid chain: Probable nitrite reductase-hydroxylamine oxidoreductase fusion protein (852 aa).

The N-terminal stretch at 1 to 27 (MLNKSAALVPVVLAFLFLFLCFQCLYA) is a signal peptide. The segment at 28–327 (DIRCLTGKDG…DEGRKTLSAP (300 aa)) is nitrite reductase domain. 2 Plastocyanin-like domains span residues 72-169 (VPGP…IVEP) and 217-307 (GETW…VEEG). Residues His-102 and His-145 each coordinate Cu cation. Positions 328 to 827 (GQDRQPPTLE…ISWWWGTAQG (500 aa)) are hydroxylamine oxidoreductase domain. Cys-406, Cys-409, His-410, His-426, Cys-463, Cys-466, His-467, His-471, Cys-483, Cys-486, His-487, His-505, His-537, Cys-543, Cys-546, His-547, His-550, Cys-563, Cys-566, His-567, Cys-614, Cys-617, His-618, Cys-686, Cys-689, His-690, and His-813 together coordinate heme.

In the N-terminal section; belongs to the multicopper oxidase family. Requires Cu cation as cofactor. Heme serves as cofactor.

The protein localises to the encapsulin nanocompartment. The enzyme catalyses hydroxylamine + 4 Fe(III)-[cytochrome c] + H2O = 4 Fe(II)-[cytochrome c] + nitrite + 5 H(+). The catalysed reaction is nitric oxide + Fe(III)-[cytochrome c] + H2O = Fe(II)-[cytochrome c] + nitrite + 2 H(+). Functionally, a nitrite reductase-hydroxylamine oxidoreductase protein that probably functions in the type 1 encapsulin nanocompartment. Probably involved in reductive catalysis. Targeted to the encapsulin nanocompartment by association with the diheme domain of the encapsulin shell protein (AC Q1Q6L7). Catalyzes the reduction of nitrite to nitric oxide (NO). Catalyzes the oxidation of hydroxylamine to nitrite. The sequence is that of Probable nitrite reductase-hydroxylamine oxidoreductase fusion protein from Kuenenia stuttgartiensis.